Reading from the N-terminus, the 152-residue chain is Deoxyuridine 5'-triphosphate nucleotidohydrolase (152 aa).

Substrate is bound by residues 71-73 (RSG), Asn-84, 88-90 (LID), and Met-98.

The protein belongs to the dUTPase family. It depends on Mg(2+) as a cofactor.

The catalysed reaction is dUTP + H2O = dUMP + diphosphate + H(+). Its pathway is pyrimidine metabolism; dUMP biosynthesis; dUMP from dCTP (dUTP route): step 2/2. Its function is as follows. This enzyme is involved in nucleotide metabolism: it produces dUMP, the immediate precursor of thymidine nucleotides and it decreases the intracellular concentration of dUTP so that uracil cannot be incorporated into DNA. The chain is Deoxyuridine 5'-triphosphate nucleotidohydrolase from Klebsiella pneumoniae (strain 342).